Consider the following 81-residue polypeptide: UPF0729 protein C18orf32 homolog (81 aa).

Residues 45-58 (AASDQKVSEKSNGT) are compositionally biased toward polar residues. The segment at 45–81 (AASDQKVSEKSNGTCKPESNGEATANGSTIAADKKTD) is disordered.

Belongs to the UPF0729 family.

The protein is UPF0729 protein C18orf32 homolog of Anoplopoma fimbria (Sablefish).